The sequence spans 364 residues: Coproporphyrin III ferrochelatase (364 aa).

2 residues coordinate Fe-coproporphyrin III: Arg29 and Tyr118. Positions 169 and 250 each coordinate Fe(2+).

It belongs to the ferrochelatase family.

It is found in the cytoplasm. The catalysed reaction is Fe-coproporphyrin III + 2 H(+) = coproporphyrin III + Fe(2+). Its pathway is porphyrin-containing compound metabolism; protoheme biosynthesis. In terms of biological role, involved in coproporphyrin-dependent heme b biosynthesis. Catalyzes the insertion of ferrous iron into coproporphyrin III to form Fe-coproporphyrin III. The sequence is that of Coproporphyrin III ferrochelatase from Streptococcus pneumoniae (strain 70585).